A 163-amino-acid chain; its full sequence is Single-stranded DNA-binding protein 1 (163 aa).

Positions 1–104 (MINNVVLVGR…VVAESFQLLE (104 aa)) constitute an SSB domain. The tract at residues 106–163 (RATREGGSPNSYNNGGYNNAPSNNSYSASSQQTPNFSRDESPFGNSNPMDISDDDLPF) is disordered. Over residues 111–135 (GGSPNSYNNGGYNNAPSNNSYSASS) the composition is skewed to low complexity. The Important for interaction with partner proteins motif lies at 158–163 (DDDLPF).

As to quaternary structure, homotetramer.

Its function is as follows. Plays an important role in DNA replication, recombination and repair. Binds to ssDNA and to an array of partner proteins to recruit them to their sites of action during DNA metabolism. The sequence is that of Single-stranded DNA-binding protein 1 (ssb1) from Streptococcus agalactiae serotype III (strain NEM316).